The sequence spans 489 residues: Ulvan Lyase-PL25 (489 aa).

An N-terminal signal peptide occupies residues M1 to G31. Residue C32 is the site of N-palmitoyl cysteine attachment. A lipid anchor (S-diacylglycerol cysteine) is attached at C32. Residues N60 and N122 each coordinate substrate. H123 (proton donor) is an active-site residue. Substrate-binding residues include K125 and H143. The active-site Proton acceptor is the Y188. Positions 204, 208, and 246 each coordinate substrate. H208 contributes to the Zn(2+) binding site. 3 residues coordinate Zn(2+): H264, C266, and H278. H278 provides a ligand contact to substrate.

This sequence belongs to the polysaccharide lyase 25 family.

The protein localises to the cell membrane. Functionally, ulvan lyase involved in ulvan degradation. Ulvan is the main polysaccharide component of the Ulvales (green seaweed) cell wall. It is composed of disaccharide building blocks comprising 3-sulfated rhamnose (Rha3S) linked to D-glucuronic acid (GlcA), L-iduronic acid (IduA), or D-xylose (Xyl). Ulvan lyase catalyzes the endolytic cleavage of the glycosidic bond between Rha3S and the uronic acids GlcA or IduA, producing oligosaccharides that have unsaturated 4-deoxy-L-threo-hex-4-enopyranosiduronic acid (deltaUA) at the non-reducing end. This results eventually in the degradation of the ulvan polysaccharide into deltaUA-Rha3S disaccharides and deltaUA-Rha3S-Xyl-Rha3S tetrasaccharides. The sequence is that of Ulvan Lyase-PL25 from Pseudoalteromonas sp. (strain PLSV).